The primary structure comprises 1004 residues: METESEQNSNSTNGSSSSGGSSRPQIAQMSLYERQAVQALQALQRQPNAAQYFHQFMLQQQLSNAQLHSLAAVQQATIAASRQASSPNTSTTQQQTTTTQASINLATTSAAQLISRSQSVSSPSATTLTQSVLLGNTTSPPLNQSQAQMYLRPQLGNLLQVNRTLGRNVPLASQLILMPNGAVAAVQQEVPSAQSPGVHADADQVQNLAVRNQQASAQGPQMQGSTQKAIPPGASPVSSLSQASSQALAVAQASSGATNQSLNLSQAGGGSGNSIPGSMGPGGGGQAHGGLGQLPSSGMGGGSCPRKGTGVVQPLPAAQTVTVSQGSQTEAESAAAKKAEADGSGQQNVGMNLTRTATPAPSQTLISSATYTQIQPHSLIQQQQQIHLQQKQVVIQQQIAIHHQQQFQHRQSQLLHTATHLQLAQQQQQQQQQQQQQQQPQATTLTAPQPPQVPPTQQVPPSQSQQQAQTLVVQPMLQSSPLSLPPDAAPKPPIPIQSKPPVAPIKPPQLGAAKMSAAQQPPPHIPVQVVGTRQPGTAQAQALGLAQLAAAVPTSRGMPGTVQSGQAHLASSPPSSQAPGALQECPPTLAPGMTLAPVQGTAHVVKGGATTSSPVVAQVPAAFYMQSVHLPGKPQTLAVKRKADSEEERDDVSTLGSMLPAKASPVAESPKVMDEKSSLGEKAESVANVNANTPSSELVALTPAPSVPPPTLAMVSRQMGDSKPPQAIVKPQILTHIIEGFVIQEGAEPFPVGCSQLLKESEKPLQTGLPTGLTENQSGGPLGVDSPSAELDKKANLLKCEYCGKYAPAEQFRGSKRFCSMTCAKRYNVSCSHQFRLKRKKMKEFQEANYARVRRRGPRRSSSDIARAKIQGKCHRGQEDSSRGSDNSSYDEALSPTSPGPLSVRAGHGERDLGNPNTAPPTPELHGINPVFLSSNPSRWSVEEVYEFIASLQGCQEIAEEFRSQEIDGQALLLLKEEHLMSAMNIKLGPALKICAKINVLKET.

Over residues 1–22 (METESEQNSNSTNGSSSSGGSS) the composition is skewed to low complexity. Disordered regions lie at residues 1–24 (METESEQNSNSTNGSSSSGGSSRP), 212–241 (NQQASAQGPQMQGSTQKAIPPGASPVSSLS), 261–355 (SLNL…NLTR), 432–512 (QQQQ…QLGA), 556–589 (RGMPGTVQSGQAHLASSPPSSQAPGALQECPPTL), and 636–672 (TLAVKRKADSEEERDDVSTLGSMLPAKASPVAESPKV). Positions 212-228 (NQQASAQGPQMQGSTQK) are enriched in polar residues. Over residues 279–303 (MGPGGGGQAHGGLGQLPSSGMGGGS) the composition is skewed to gly residues. Polar residues-rich tracts occupy residues 319–329 (QTVTVSQGSQT) and 344–355 (SGQQNVGMNLTR). A compositionally biased stretch (low complexity) spans 432 to 447 (QQQQQQQQPQATTLTA). Residues 448–458 (PQPPQVPPTQQ) are compositionally biased toward pro residues. Residues 459-482 (VPPSQSQQQAQTLVVQPMLQSSPL) show a composition bias toward low complexity. Positions 483 to 495 (SLPPDAAPKPPIP) are enriched in pro residues. Positions 566–583 (QAHLASSPPSSQAPGALQ) are enriched in low complexity. Ser645 is modified (phosphoserine). A Glycyl lysine isopeptide (Lys-Gly) (interchain with G-Cter in SUMO2) cross-link involves residue Lys763. The segment at 791–825 (LDKKANLLKCEYCGKYAPAEQFRGSKRFCSMTCAK) adopts an FCS-type zinc-finger fold. Residues Cys800, Cys803, Cys819, and Cys823 each coordinate Zn(2+). The interval 848 to 928 (ANYARVRRRG…APPTPELHGI (81 aa)) is disordered. Position 898 is a phosphoserine (Ser898). Thr922 is modified (phosphothreonine). The SAM domain occupies 940-1004 (WSVEEVYEFI…CAKINVLKET (65 aa)).

As to quaternary structure, homodimer. Component of a PRC1-like complex. Interacts with RNF2 and CBX7. Interacts with PHC2, PHC2 and BMI1.

It localises to the nucleus. Its function is as follows. Component of a Polycomb group (PcG) multiprotein PRC1-like complex, a complex class required to maintain the transcriptionally repressive state of many genes, including Hox genes, throughout development. PcG PRC1 complex acts via chromatin remodeling and modification of histones; it mediates monoubiquitination of histone H2A 'Lys-119', rendering chromatin heritably changed in its expressibility. Required for proper control of cellular levels of GMNN expression. This chain is Polyhomeotic-like protein 1 (PHC1), found in Homo sapiens (Human).